The following is a 115-amino-acid chain: Large ribosomal subunit protein bL19 (115 aa).

Belongs to the bacterial ribosomal protein bL19 family.

Functionally, this protein is located at the 30S-50S ribosomal subunit interface and may play a role in the structure and function of the aminoacyl-tRNA binding site. The protein is Large ribosomal subunit protein bL19 of Hydrogenovibrio crunogenus (strain DSM 25203 / XCL-2) (Thiomicrospira crunogena).